We begin with the raw amino-acid sequence, 325 residues long: Hydroxylase/desaturase poxK (325 aa).

Over residues 1–12 the composition is skewed to low complexity; sequence MTATATPVPTVA. The interval 1 to 25 is disordered; it reads MTATATPVPTVASHAQDITLPPPPK.

The protein belongs to the asaB hydroxylase/desaturase family.

It participates in secondary metabolite biosynthesis. Its function is as follows. Hydroxylase/desaturase; part of the gene cluster that mediates the biosynthesis of oxaleimides, cytotoxic compounds containing an unusual disubstituted succinimide moiety. The first step of the pathway is provided by the HR-PKS poxF that serves in a new mode of collaborative biosynthesis with the PKS-NRPS poxE, by providing the olefin containing amino acid substrate via the synthesis of an ACP-bound dec-4-enoate. The cytochrome P450 monooxygenase poxM-catalyzed oxidation at the alpha-position creates the enzyme-bound 2-hydroxydec-4-enoyl-ACP thioester, which may be prone to spontaneous hydrolysis to yield 2-hydroxydec-4-enoic acid due to increased electrophilicity of the carbonyl. 2-hydroxydec-4-enoic acid can then be further oxidized by poxM to yield the alpha-ketoacid 2-oxodec-4-enoicacid, which is reductively aminated by the aminotransferase poxL to yield (S,E)-2-aminodec-4-enoic acid. The Hybrid PKS-NRPS synthetase poxE then performs condensation between the octaketide product of its PKS modules and the amino group of (S,E)-2-aminodec-4-enoic acid which is activated and incorporated by the adenylation domain. The resulting aminoacyl product can be cyclized by the Diels-Alderase PoxQ and reductively released by the reductive (R) domain of poxE to yield an aldehyde intermediate. The released aldehyde is then substrate for a Knoevenagel condensation by the hydrolyase poxO followed by an oxidation at the 5-position of the pyrrolidone ring. The presence of the olefin from the amino acid building block allows for migration of the substituted allyl group to occur. This allylic transposition reaction takes place in a conjugate addition, semipinacol-like fashion to yield a succinimide intermediate. Iterative two-electron oxidations of the C7 methyl of the succinimide intermediate to the carboxylic acid can be catalyzed by one of two remaining cytochrome P450 monooxygenasess poxC or poxD to yield oxaleimide A. Subsequent oxidation yields the maleimide scaffold oxaleimide I. Both oxaleimide A and oxaleimide I can undergo oxidative modifications in the decalin ring to yield the series of products oxaleimides B to H. The polypeptide is Hydroxylase/desaturase poxK (Penicillium oxalicum).